Here is a 382-residue protein sequence, read N- to C-terminus: Galactokinase (382 aa).

E34–D37 is a binding site for substrate. G124–S130 is an ATP binding site. Residues S130 and E162 each contribute to the Mg(2+) site. The Proton acceptor role is filled by D174. Residue Y223 coordinates substrate.

Belongs to the GHMP kinase family. GalK subfamily.

It localises to the cytoplasm. The enzyme catalyses alpha-D-galactose + ATP = alpha-D-galactose 1-phosphate + ADP + H(+). It functions in the pathway carbohydrate metabolism; galactose metabolism. Catalyzes the transfer of the gamma-phosphate of ATP to D-galactose to form alpha-D-galactose-1-phosphate (Gal-1-P). The sequence is that of Galactokinase from Escherichia coli O9:H4 (strain HS).